Consider the following 209-residue polypeptide: Thiamine-phosphate synthase 1 (209 aa).

4-amino-2-methyl-5-(diphosphooxymethyl)pyrimidine contacts are provided by residues 39–43 and Asn-74; that span reads QFREK. The Mg(2+) site is built by Asp-75 and Asp-94. Ser-112 lines the 4-amino-2-methyl-5-(diphosphooxymethyl)pyrimidine pocket. 138-140 is a 2-[(2R,5Z)-2-carboxy-4-methylthiazol-5(2H)-ylidene]ethyl phosphate binding site; it reads TQS. 4-amino-2-methyl-5-(diphosphooxymethyl)pyrimidine is bound at residue Lys-141. 2-[(2R,5Z)-2-carboxy-4-methylthiazol-5(2H)-ylidene]ethyl phosphate is bound by residues Gly-170 and 190–191; that span reads IS.

Belongs to the thiamine-phosphate synthase family. Mg(2+) serves as cofactor.

The catalysed reaction is 2-[(2R,5Z)-2-carboxy-4-methylthiazol-5(2H)-ylidene]ethyl phosphate + 4-amino-2-methyl-5-(diphosphooxymethyl)pyrimidine + 2 H(+) = thiamine phosphate + CO2 + diphosphate. The enzyme catalyses 2-(2-carboxy-4-methylthiazol-5-yl)ethyl phosphate + 4-amino-2-methyl-5-(diphosphooxymethyl)pyrimidine + 2 H(+) = thiamine phosphate + CO2 + diphosphate. It carries out the reaction 4-methyl-5-(2-phosphooxyethyl)-thiazole + 4-amino-2-methyl-5-(diphosphooxymethyl)pyrimidine + H(+) = thiamine phosphate + diphosphate. It participates in cofactor biosynthesis; thiamine diphosphate biosynthesis; thiamine phosphate from 4-amino-2-methyl-5-diphosphomethylpyrimidine and 4-methyl-5-(2-phosphoethyl)-thiazole: step 1/1. Its function is as follows. Condenses 4-methyl-5-(beta-hydroxyethyl)thiazole monophosphate (THZ-P) and 2-methyl-4-amino-5-hydroxymethyl pyrimidine pyrophosphate (HMP-PP) to form thiamine monophosphate (TMP). This is Thiamine-phosphate synthase 1 from Streptococcus pneumoniae (strain ATCC BAA-255 / R6).